We begin with the raw amino-acid sequence, 247 residues long: Cell division protein ZapD (247 aa).

Belongs to the ZapD family. In terms of assembly, interacts with FtsZ.

It is found in the cytoplasm. Its function is as follows. Cell division factor that enhances FtsZ-ring assembly. Directly interacts with FtsZ and promotes bundling of FtsZ protofilaments, with a reduction in FtsZ GTPase activity. This chain is Cell division protein ZapD, found in Salmonella arizonae (strain ATCC BAA-731 / CDC346-86 / RSK2980).